Consider the following 201-residue polypeptide: MSKFIQHTGIVVPIDVSNVDTDVIIPKQFLQKITKKGFGKHLFNDWRYVDEKGTILNRKFILNNDIYKNGTILLARENFGCGSSREHAVWALVDYGFKTIIATSFSDIFYSNSLKNSLLPITLSKETIDILFQEVYKNMGMFISVNLLNNKIFVREKQYSFKINSFNKYCLMHGLDDIDLTLKYSSKILNYETLIPEFLKK.

Belongs to the LeuD family. LeuD type 1 subfamily. In terms of assembly, heterodimer of LeuC and LeuD.

The enzyme catalyses (2R,3S)-3-isopropylmalate = (2S)-2-isopropylmalate. It participates in amino-acid biosynthesis; L-leucine biosynthesis; L-leucine from 3-methyl-2-oxobutanoate: step 2/4. Functionally, catalyzes the isomerization between 2-isopropylmalate and 3-isopropylmalate, via the formation of 2-isopropylmaleate. This is 3-isopropylmalate dehydratase small subunit from Buchnera aphidicola subsp. Baizongia pistaciae (strain Bp).